We begin with the raw amino-acid sequence, 152 residues long: MATELVVQSERAFQKQPHIFQNAKKGAGRRWYKDVGLGFKTPAEAIYGEYVDKKCPFVGQVSIRGRILTGTVVSTKMHRTIIIRREYLHFIPKYNRYEKRHKNLAAHVSPAFRINEGDVVTVGQCRPLSKTVRFNVLRVVKHTEGPKQFGKF.

It belongs to the universal ribosomal protein uS17 family. In terms of assembly, component of the small ribosomal subunit (SSU). Mature yeast ribosomes consist of a small (40S) and a large (60S) subunit. The 40S small subunit contains 1 molecule of ribosomal RNA (18S rRNA) and at least 33 different proteins. The large 60S subunit contains 3 rRNA molecules (25S, 5.8S and 5S rRNA) and at least 46 different proteins.

The protein localises to the cytoplasm. It localises to the nucleus. Its function is as follows. Component of the ribosome, a large ribonucleoprotein complex responsible for the synthesis of proteins in the cell. The small ribosomal subunit (SSU) binds messenger RNAs (mRNAs) and translates the encoded message by selecting cognate aminoacyl-transfer RNA (tRNA) molecules. The large subunit (LSU) contains the ribosomal catalytic site termed the peptidyl transferase center (PTC), which catalyzes the formation of peptide bonds, thereby polymerizing the amino acids delivered by tRNAs into a polypeptide chain. The nascent polypeptides leave the ribosome through a tunnel in the LSU and interact with protein factors that function in enzymatic processing, targeting, and the membrane insertion of nascent chains at the exit of the ribosomal tunnel. The chain is Small ribosomal subunit protein uS17A (rps1101) from Schizosaccharomyces pombe (strain 972 / ATCC 24843) (Fission yeast).